The primary structure comprises 279 residues: MRKMVNIGFIKMGNLGMSQVINLIQDEIAAREGITVRVFGTGAKMGPADAADTESFKQWNADFVVMISPNAAAPGPTAAREIWKDVPCIVVSDGPTKKEAREALEQEGFGYIILPVDPLIGAKREFLDPVEMASFNSDAMKVLSSCGVVRLIQEELDRVTEQVASGKSGEDLELPHIFAKPEKCVEHAGFANPYAKAKALAALHMAEKVAQVNFPACFMLKEVEQVCLTAAAGHEIMGAAAILATQAREIEKSNDTVFRQPHAKNGTLLKKVKLYEKPE.

It belongs to the MTD family.

The catalysed reaction is 5,10-methylenetetrahydromethanopterin + oxidized coenzyme F420-(gamma-L-Glu)(n) + 2 H(+) = 5,10-methenyl-5,6,7,8-tetrahydromethanopterin + reduced coenzyme F420-(gamma-L-Glu)(n). It functions in the pathway one-carbon metabolism; methanogenesis from CO(2); 5,10-methylene-5,6,7,8-tetrahydromethanopterin from 5,10-methenyl-5,6,7,8-tetrahydromethanopterin (coenzyme F420 route): step 1/1. Functionally, catalyzes the reversible reduction of methenyl-H(4)MPT(+) to methylene-H(4)MPT. This Methanosarcina acetivorans (strain ATCC 35395 / DSM 2834 / JCM 12185 / C2A) protein is F420-dependent methylenetetrahydromethanopterin dehydrogenase (mtd).